We begin with the raw amino-acid sequence, 151 residues long: Mitochondrial intermembrane space import and assembly protein 40 homolog (151 aa).

The interval 1–35 (MGQGLSQPAQAVEEPSPPAVEAAPSSSPSPAPAPS) is disordered. The segment covering 7-26 (QPAQAVEEPSPPAVEAAPSS) has biased composition (low complexity). 3 cysteine pairs are disulfide-bonded: cysteine 65–cysteine 67, cysteine 76–cysteine 109, and cysteine 86–cysteine 99. In terms of domain architecture, CHCH spans 73–117 (NGPCGSQFVDAFSCFLKSTEEEKGSDCVKPFIALQDCIKINPEAF). Short sequence motifs (cx9C motif) lie at residues 76 to 86 (CGSQFVDAFSC) and 99 to 109 (CVKPFIALQDC). The disordered stretch occupies residues 123-151 (EEEENDEEAEKSNLKVRAPAWSRESKPKL).

The protein localises to the mitochondrion intermembrane space. The protein resides in the peroxisome matrix. Its function is as follows. Required for the import and folding of small cysteine-containing proteins in the mitochondrial intermembrane space. In Oryza sativa subsp. japonica (Rice), this protein is Mitochondrial intermembrane space import and assembly protein 40 homolog.